A 260-amino-acid polypeptide reads, in one-letter code: Flagellar basal-body rod protein FlgG (260 aa).

Belongs to the flagella basal body rod proteins family. The basal body constitutes a major portion of the flagellar organelle and consists of four rings (L,P,S, and M) mounted on a central rod. The rod consists of about 26 subunits of FlgG in the distal portion, and FlgB, FlgC and FlgF are thought to build up the proximal portion of the rod with about 6 subunits each.

The protein resides in the bacterial flagellum basal body. This is Flagellar basal-body rod protein FlgG (flgG) from Escherichia coli O157:H7.